The primary structure comprises 360 residues: Photosystem II protein D1 (360 aa).

3 consecutive transmembrane segments (helical) span residues 29–46 (YIGW…TATS), 118–133 (HFLT…EWEL), and 142–156 (WISV…AAAA). Residue His118 participates in chlorophyll a binding. Tyr126 is a binding site for pheophytin a. The [CaMn4O5] cluster site is built by Asp170 and Glu189. The helical transmembrane segment at 197 to 218 (FHQLGVAGVFGGSLFSAMHGSL) threads the bilayer. His198 contacts chlorophyll a. A quinone-binding positions include His215 and 264–265 (SF). His215 contacts Fe cation. Position 272 (His272) interacts with Fe cation. Residues 274–288 (FLGLWPVVGIWLTAL) traverse the membrane as a helical segment. The [CaMn4O5] cluster site is built by His332, Glu333, Asp342, and Ala344. Positions 345-360 (SGESLPVALTAPAVNG) are excised as a propeptide.

The protein belongs to the reaction center PufL/M/PsbA/D family. In terms of assembly, PSII is composed of 1 copy each of membrane proteins PsbA, PsbB, PsbC, PsbD, PsbE, PsbF, PsbH, PsbI, PsbJ, PsbK, PsbL, PsbM, PsbT, PsbX, PsbY, PsbZ, Psb30/Ycf12, at least 3 peripheral proteins of the oxygen-evolving complex and a large number of cofactors. It forms dimeric complexes. The D1/D2 heterodimer binds P680, chlorophylls that are the primary electron donor of PSII, and subsequent electron acceptors. It shares a non-heme iron and each subunit binds pheophytin, quinone, additional chlorophylls, carotenoids and lipids. D1 provides most of the ligands for the Mn4-Ca-O5 cluster of the oxygen-evolving complex (OEC). There is also a Cl(-1) ion associated with D1 and D2, which is required for oxygen evolution. The PSII complex binds additional chlorophylls, carotenoids and specific lipids. is required as a cofactor. Post-translationally, tyr-161 forms a radical intermediate that is referred to as redox-active TyrZ, YZ or Y-Z. C-terminally processed by CTPA; processing is essential to allow assembly of the oxygen-evolving complex and thus photosynthetic growth.

Its subcellular location is the plastid. It localises to the chloroplast thylakoid membrane. It catalyses the reaction 2 a plastoquinone + 4 hnu + 2 H2O = 2 a plastoquinol + O2. In terms of biological role, photosystem II (PSII) is a light-driven water:plastoquinone oxidoreductase that uses light energy to abstract electrons from H(2)O, generating O(2) and a proton gradient subsequently used for ATP formation. It consists of a core antenna complex that captures photons, and an electron transfer chain that converts photonic excitation into a charge separation. The D1/D2 (PsbA/PsbD) reaction center heterodimer binds P680, the primary electron donor of PSII as well as several subsequent electron acceptors. This is Photosystem II protein D1 from Porphyra purpurea (Red seaweed).